The sequence spans 321 residues: Methionyl-tRNA formyltransferase (321 aa).

Position 112–115 (112–115 (SILP)) interacts with (6S)-5,6,7,8-tetrahydrofolate.

The protein belongs to the Fmt family.

The enzyme catalyses L-methionyl-tRNA(fMet) + (6R)-10-formyltetrahydrofolate = N-formyl-L-methionyl-tRNA(fMet) + (6S)-5,6,7,8-tetrahydrofolate + H(+). Attaches a formyl group to the free amino group of methionyl-tRNA(fMet). The formyl group appears to play a dual role in the initiator identity of N-formylmethionyl-tRNA by promoting its recognition by IF2 and preventing the misappropriation of this tRNA by the elongation apparatus. The polypeptide is Methionyl-tRNA formyltransferase (Shewanella pealeana (strain ATCC 700345 / ANG-SQ1)).